Here is a 417-residue protein sequence, read N- to C-terminus: Serine hydroxymethyltransferase (417 aa).

(6S)-5,6,7,8-tetrahydrofolate-binding positions include leucine 121 and 125–127; that span reads GHL. At lysine 229 the chain carries N6-(pyridoxal phosphate)lysine. Residue 355 to 357 participates in (6S)-5,6,7,8-tetrahydrofolate binding; it reads SPF.

Belongs to the SHMT family. In terms of assembly, homodimer. It depends on pyridoxal 5'-phosphate as a cofactor.

The protein resides in the cytoplasm. The enzyme catalyses (6R)-5,10-methylene-5,6,7,8-tetrahydrofolate + glycine + H2O = (6S)-5,6,7,8-tetrahydrofolate + L-serine. Its pathway is one-carbon metabolism; tetrahydrofolate interconversion. It participates in amino-acid biosynthesis; glycine biosynthesis; glycine from L-serine: step 1/1. Its function is as follows. Catalyzes the reversible interconversion of serine and glycine with tetrahydrofolate (THF) serving as the one-carbon carrier. This reaction serves as the major source of one-carbon groups required for the biosynthesis of purines, thymidylate, methionine, and other important biomolecules. Also exhibits THF-independent aldolase activity toward beta-hydroxyamino acids, producing glycine and aldehydes, via a retro-aldol mechanism. The protein is Serine hydroxymethyltransferase of Enterobacter sp. (strain 638).